A 409-amino-acid chain; its full sequence is Glucan endo-1,6-beta-glucosidase B (409 aa).

The first 16 residues, 1–16 (MKFILPLFTSLPVALA), serve as a signal peptide directing secretion. Residue Asn-35 is glycosylated (N-linked (GlcNAc...) asparagine). Glu-228 acts as the Proton donor in catalysis. The active-site Nucleophile is the Glu-330.

This sequence belongs to the glycosyl hydrolase 5 (cellulase A) family.

The protein resides in the secreted. It carries out the reaction Random hydrolysis of (1-&gt;6)-linkages in (1-&gt;6)-beta-D-glucans.. In terms of biological role, beta-glucanases participate in the metabolism of beta-glucan, the main structural component of the cell wall. Acts on lutean, pustulan and 1,6-oligo-beta-D-glucosides. The polypeptide is Glucan endo-1,6-beta-glucosidase B (exgB) (Emericella nidulans (strain FGSC A4 / ATCC 38163 / CBS 112.46 / NRRL 194 / M139) (Aspergillus nidulans)).